The sequence spans 139 residues: uncharacterized protein (139 aa).

Transmembrane regions (helical) follow at residues 35–55 and 119–139; these read AYFK…AAAA and CCLF…VFCV.

The protein resides in the membrane. This is an uncharacterized protein from Saccharomyces cerevisiae (strain ATCC 204508 / S288c) (Baker's yeast).